Consider the following 268-residue polypeptide: Aliphatic sulfonates import ATP-binding protein SsuB 2 (268 aa).

Residues 16 to 230 (VQLRNVVRQF…DSGQAGFQSI (215 aa)) form the ABC transporter domain. Position 48–55 (48–55 (GASGSGKT)) interacts with ATP.

Belongs to the ABC transporter superfamily. Aliphatic sulfonates importer (TC 3.A.1.17.2) family. In terms of assembly, the complex is composed of two ATP-binding proteins (SsuB), two transmembrane proteins (SsuC) and a solute-binding protein (SsuA).

It is found in the cell inner membrane. It carries out the reaction ATP + H2O + aliphatic sulfonate-[sulfonate-binding protein]Side 1 = ADP + phosphate + aliphatic sulfonateSide 2 + [sulfonate-binding protein]Side 1.. Its function is as follows. Part of the ABC transporter complex SsuABC involved in aliphatic sulfonates import. Responsible for energy coupling to the transport system. This is Aliphatic sulfonates import ATP-binding protein SsuB 2 from Pseudomonas savastanoi pv. phaseolicola (strain 1448A / Race 6) (Pseudomonas syringae pv. phaseolicola (strain 1448A / Race 6)).